Reading from the N-terminus, the 727-residue chain is Glucans biosynthesis glucosyltransferase H (727 aa).

The tract at residues 18-38 (SAMPNERPGAMEPQNLSKMPE) is disordered. A run of 7 helical transmembrane segments spans residues 58–78 (FLVV…MGAV), 97–117 (VNFC…LILL), 278–298 (LQQF…GWWV), 408–428 (IMAY…LMLA), 460–480 (LFYI…LLLL), 496–516 (IFSV…MMFI), and 572–592 (LLAW…ISAW).

It belongs to the glycosyltransferase 2 family. OpgH subfamily.

The protein resides in the cell inner membrane. It functions in the pathway glycan metabolism; osmoregulated periplasmic glucan (OPG) biosynthesis. Its function is as follows. Involved in the biosynthesis of osmoregulated periplasmic glucans (OPGs). In Shewanella baltica (strain OS223), this protein is Glucans biosynthesis glucosyltransferase H.